A 734-amino-acid chain; its full sequence is MALRFPRFSQGLAQDPTTRRIWFGIATAHDFESHDDITEERLYQNIFASHFGQLAIIFLWTSGNLFHVAWQGNFEAWVQDPLHVRPIAHAIWDPHFGQPAVEAFTRGGALGPVNIAYSGVYQWWYTIGLRTNGDLYNGALFLLFISAISLIAGWLHLQPKWKPSVSWFKNAESRLNHHLSGLFGVSSLAWTGHLVHVAIPGSRGEYVRWNNFLDVLPHPQGLGPLFTGQWNLYAQNPDSSSHLFGNSQGAGTAILTLLGGFHPQTQSLWLTDIAHHHLAIAFIFLIAGHMYRTNFGIGHSIKNLLEAHIPPGGRLGRGHKGLYDTINNSIHFQLGLALASLGVITSLVAQHMYSLPAYAFIAQDFTTQAALYTHHQYIAGFIMTGAFAHGAIFFIRDYNPEQNEDNVLARMLDHKEAIISHLSWASLFLGFHTLGLYVHNDVMLAFGTPEKQILIEPIFAQWIQSAHGKTSYGFDVLLSSTNGPAFNAGRSIWLPGWLNAINENSNSLFLTIGPGDFLVHHAIALGLHTTTLILVKGALDARGSKLMPDKKDFGYSFPCDGPGRGGTCDISAWDAFYLAVFWMLNTIGWVTFYWHWKHITLWQGNVSQFNESSTYLMGWLRDYLWLNSSQLINGYNPFGMNSLSVWAWMFLFGHLVWATGFMFLISWRGYWQELIETLAWAHERTPLANLIRWRDKPVALSIVQARLVGLAHFSVGYIFTYAAFLIASTSGKFG.

Transmembrane regions (helical) follow at residues Ile46–Ala69, Leu135–Gln158, Leu175–Ile199, Ile273–Tyr291, Ile330–Tyr353, Ala369–Ile395, Ala417–His439, and Phe517–Val535. Cys559 and Cys568 together coordinate [4Fe-4S] cluster. A run of 2 helical transmembrane segments spans residues Ala575 to Trp596 and Leu643 to Ile665. 3 residues coordinate chlorophyll a: His654, Met662, and Tyr670. Trp671 contributes to the phylloquinone binding site. A helical transmembrane segment spans residues Leu707–Ala727.

It belongs to the PsaA/PsaB family. In terms of assembly, the PsaA/B heterodimer binds the P700 chlorophyll special pair and subsequent electron acceptors. PSI consists of a core antenna complex that captures photons, and an electron transfer chain that converts photonic excitation into a charge separation. The eukaryotic PSI reaction center is composed of at least 11 subunits. It depends on P700 is a chlorophyll a/chlorophyll a' dimer, A0 is one or more chlorophyll a, A1 is one or both phylloquinones and FX is a shared 4Fe-4S iron-sulfur center. as a cofactor.

The protein resides in the plastid. It is found in the chloroplast thylakoid membrane. The catalysed reaction is reduced [plastocyanin] + hnu + oxidized [2Fe-2S]-[ferredoxin] = oxidized [plastocyanin] + reduced [2Fe-2S]-[ferredoxin]. In terms of biological role, psaA and PsaB bind P700, the primary electron donor of photosystem I (PSI), as well as the electron acceptors A0, A1 and FX. PSI is a plastocyanin-ferredoxin oxidoreductase, converting photonic excitation into a charge separation, which transfers an electron from the donor P700 chlorophyll pair to the spectroscopically characterized acceptors A0, A1, FX, FA and FB in turn. Oxidized P700 is reduced on the lumenal side of the thylakoid membrane by plastocyanin. This is Photosystem I P700 chlorophyll a apoprotein A2 from Morus indica (Mulberry).